A 2324-amino-acid chain; its full sequence is Myomegalin (2324 aa).

Coiled coils occupy residues arginine 41–alanine 132, glutamine 158–glutamate 205, aspartate 238–glutamate 288, and leucine 348–alanine 638. 2 disordered regions span residues threonine 72 to glutamine 96 and glutamate 205 to histidine 240. Over residues alanine 85 to glutamine 96 the composition is skewed to basic and acidic residues. Residues proline 219 to aspartate 238 are compositionally biased toward polar residues. Positions proline 701–serine 747 are disordered. Threonine 705 is subject to Phosphothreonine. Basic and acidic residues predominate over residues serine 724–serine 738. 3 coiled-coil regions span residues glycine 745 to aspartate 822, glutamate 855 to leucine 923, and leucine 1011 to serine 1043. 2 disordered regions span residues leucine 1155–leucine 1182 and asparagine 1195–histidine 1216. Coiled-coil stretches lie at residues serine 1213–threonine 1241, threonine 1346–threonine 1384, and glycine 1430–glycine 1455. Disordered stretches follow at residues threonine 1540–alanine 1559, arginine 1589–serine 1610, tyrosine 1628–proline 1685, alanine 1742–arginine 1773, leucine 1857–serine 1877, and asparagine 2081–lysine 2140. The 92-residue stretch at lysine 1550–serine 1641 folds into the Olduvai domain. Composition is skewed to low complexity over residues serine 1591–serine 1610 and serine 1637–serine 1646. The span at proline 1743–glutamine 1767 shows a compositional bias: polar residues. Residues glycine 1821–aspartate 2056 adopt a coiled-coil conformation. 2 stretches are compositionally biased toward polar residues: residues asparagine 2081 to alanine 2090 and proline 2108 to threonine 2135. Positions glutamate 2248–threonine 2274 form a coiled coil.

Interacts with PDE4D. May interact with MAPRE1 and MAPRE3. May form a pericentrosomal complex with AKAP9, CDK5RAP2 and EB1/MAPRE1 in an isoform-specific manner; within this complex, may mediate MAPRE1-binding to CDK5RAP2. Interaction with AKAP9 stabilizes both proteins. May interact with CAMSAP2 in an isoform-specific manner; this interaction is much stronger in the presence of AKAP9. In complex with AKAP9, recruits CAMSAP2 to the Golgi apparatus. May interact with unglycosylated LGALS3BP in an isoform-specific manner; this interaction may connect the pericentrosomal complex to the gamma-tubulin ring complex (gamma-TuRC) to promote microtubule assembly and acetylation. As to expression, abundantly expressed in heart and skeletal muscle and to a lower extent in brain, lung and liver. Expressed in heart, skeletal muscle and testis (at protein level).

It localises to the cytoplasm. The protein resides in the cytoskeleton. Its subcellular location is the microtubule organizing center. It is found in the centrosome. The protein localises to the golgi apparatus. In terms of biological role, functions as an anchor sequestering components of the cAMP-dependent pathway to Golgi and/or centrosomes. May participate in microtubule dynamics, promoting microtubule assembly, in an isoform-specific manner. Depending upon the cell context, may act at the level of the Golgi apparatus or that of the centrosome. In complex with AKAP9, recruits CAMSAP2 to the Golgi apparatus and tethers non-centrosomal minus-end microtubules to the Golgi, an important step for polarized cell movement. In complex with AKAP9, EB1/MAPRE1 and CDK5RAP2, contributes to microtubules nucleation and extension from the centrosome to the cell periphery, a crucial process for directed cell migration, mitotic spindle orientation and cell-cycle progression. In Rattus norvegicus (Rat), this protein is Myomegalin (Pde4dip).